The following is a 455-amino-acid chain: D-arabinitol 4-dehydrogenase (455 aa).

It belongs to the mannitol dehydrogenase family. In terms of assembly, monomer.

It carries out the reaction D-arabinitol + NAD(+) = D-xylulose + NADH + H(+). Its pathway is carbohydrate metabolism; D-arabinitol metabolism. This is D-arabinitol 4-dehydrogenase (dalD) from Klebsiella pneumoniae.